Reading from the N-terminus, the 607-residue chain is NAD-dependent protein deacetylase sir-2.1 (607 aa).

Residues 1 to 68 (MSRDSGNDSE…SVSSESWQNN (68 aa)) form a disordered region. A compositionally biased stretch (low complexity) spans 55–64 (ESTTSVSSES). The Deacetylase sirtuin-type domain maps to 128–401 (KLTNYNSLAD…DSIMEQQGKT (274 aa)). NAD(+)-binding positions include 153–172 (GAGVSVSCGIPDFRSKDGIY) and 237–240 (QNID). The active-site Proton acceptor is the His-255. Residues Cys-263, Cys-266, Cys-287, and Cys-290 each contribute to the Zn(2+) site. NAD(+) contacts are provided by residues 327 to 329 (GSS), 352 to 354 (NRE), and Cys-369. The disordered stretch occupies residues 426-453 (EKRNDDSSDEPTLKKPRMSVADDSMDSE).

The protein belongs to the sirtuin family. Class I subfamily. In terms of assembly, interacts with ftt-2 and par-5. Interacts with daf-16 following heat-shock, which causes daf-16 to accumulate in the nucleus. Interaction with daf-16 is promoted by ftt-2. Interacts with transcriptional coregulator hcf-1. Zn(2+) serves as cofactor.

Its subcellular location is the nucleus. It is found in the cytoplasm. The enzyme catalyses N(6)-acetyl-L-lysyl-[protein] + NAD(+) + H2O = 2''-O-acetyl-ADP-D-ribose + nicotinamide + L-lysyl-[protein]. Functionally, NAD-dependent deacetylase. Involved in metabolism, apoptosis, response to oxidative stress, response to DNA damage, and determination of lifespan. Required for a reduction of the 'Lys-16' acetylation of histone H4 (H4K16ac) on dosage-compensated X chromosomes in hermaphrodites. Plays a role in germ cell and somatic cell apoptosis in response to DNA damage. Functions upstream of daf-16/Forkhead box protein O in the Insulin/IGF-1-like signaling (IIS) mediated pathway, promoting daf-16 mediated transcriptional activation and increased lifespan. May also regulate lifespan independently of daf-16 by modulating the transcription of genes involved in the stress response of the endoplasmic reticulum (ER). Functions upstream of transcriptional coregulator hcf-1, perhaps acting independently of the IIS mediated pathway, to modulate lifespan and oxidative stress response. Acts upstream of the nicotinic acid metabolism pathway, which may be linked to the regulation of longevity. Plays a role in ascaroside-mediated longevity and stress resistance. In Caenorhabditis elegans, this protein is NAD-dependent protein deacetylase sir-2.1.